A 308-amino-acid chain; its full sequence is MPKQCRHLLQTSDLSMDEIKLLLKKASVYANDFNAVSLEVKEKIHNKIIVALFFENSTRTVSSFEIASLRLGAKMVKLNMQTSSTSKGETLIDTFKNIHAMQPDAIIMRHAFSSAPFKLVEFSQCPLINAGSGTSAHPTQALLDLLTLYQHFGSLENLKGKKIAFIGDVKNSRVANSNIKLLQRLGLEIMLCAPSSMLPSTPLIKTTHHIGEAIEFADILMSLRTQTERHNTPIFASLKDYANAYCITQKRLYDHAKNKEVVILHPGPVHRDIDIESTMLEDRRSKVLEQVKNGVAMRMAVLEFLLVD.

Carbamoyl phosphate is bound by residues R59 and T60. Residue K87 coordinates L-aspartate. 3 residues coordinate carbamoyl phosphate: R109, H137, and Q140. R173 and R224 together coordinate L-aspartate. Carbamoyl phosphate-binding residues include G267 and P268.

This sequence belongs to the aspartate/ornithine carbamoyltransferase superfamily. ATCase family. In terms of assembly, heterododecamer (2C3:3R2) of six catalytic PyrB chains organized as two trimers (C3), and six regulatory PyrI chains organized as three dimers (R2).

The enzyme catalyses carbamoyl phosphate + L-aspartate = N-carbamoyl-L-aspartate + phosphate + H(+). It functions in the pathway pyrimidine metabolism; UMP biosynthesis via de novo pathway; (S)-dihydroorotate from bicarbonate: step 2/3. Its function is as follows. Catalyzes the condensation of carbamoyl phosphate and aspartate to form carbamoyl aspartate and inorganic phosphate, the committed step in the de novo pyrimidine nucleotide biosynthesis pathway. In Helicobacter acinonychis (strain Sheeba), this protein is Aspartate carbamoyltransferase catalytic subunit.